Reading from the N-terminus, the 794-residue chain is DNA mismatch repair protein pms1 (794 aa).

2 disordered regions span residues 351 to 384 (SQIP…SFSY) and 409 to 442 (GASL…TASS). The segment covering 352–371 (QIPDSSGDSTDQELPQSIPA) has biased composition (polar residues). Positions 419–429 (LPERLQKDSMR) are enriched in basic and acidic residues. Over residues 430–442 (RSSPLNEKVTASS) the composition is skewed to polar residues.

This sequence belongs to the DNA mismatch repair MutL/HexB family.

This protein is involved in the repair of mismatches in DNA. The chain is DNA mismatch repair protein pms1 (pms1) from Schizosaccharomyces pombe (strain 972 / ATCC 24843) (Fission yeast).